The following is a 119-amino-acid chain: Protein TusC (119 aa).

It belongs to the DsrF/TusC family. In terms of assembly, heterohexamer, formed by a dimer of trimers. The hexameric TusBCD complex contains 2 copies each of TusB, TusC and TusD. The TusBCD complex interacts with TusE.

It is found in the cytoplasm. Its function is as follows. Part of a sulfur-relay system required for 2-thiolation of 5-methylaminomethyl-2-thiouridine (mnm(5)s(2)U) at tRNA wobble positions. The protein is Protein TusC of Serratia proteamaculans (strain 568).